Consider the following 172-residue polypeptide: MSDQQQQQPGQDGQPFFNIQRVYLKDLSLEQPNSPHIFLEQEQPSVEVQVDVAASQLAEGVFEVTVIGTVTTKVQEKVAFLVEAKQAGIFDIRNVPAEQMDPLLGIACPTIVYPYLRSNIADTIGRAGFQPIHLAEINFQALYEQRLAAAMEQQGQAGGTGLVMPDGSKATH.

The protein belongs to the SecB family. In terms of assembly, homotetramer, a dimer of dimers. One homotetramer interacts with 1 SecA dimer.

It localises to the cytoplasm. Functionally, one of the proteins required for the normal export of preproteins out of the cell cytoplasm. It is a molecular chaperone that binds to a subset of precursor proteins, maintaining them in a translocation-competent state. It also specifically binds to its receptor SecA. The chain is Protein-export protein SecB from Ralstonia pickettii (strain 12J).